The primary structure comprises 295 residues: Shikimate dehydrogenase (NADP(+)) (295 aa).

Shikimate-binding positions include 18–20 and T66; that span reads SRS. K70 serves as the catalytic Proton acceptor. Positions 91 and 106 each coordinate shikimate. NADP(+)-binding positions include 130–134 and M235; that span reads GNGGA. Y237 is a binding site for shikimate. G258 contacts NADP(+).

Belongs to the shikimate dehydrogenase family. Homodimer.

The enzyme catalyses shikimate + NADP(+) = 3-dehydroshikimate + NADPH + H(+). The protein operates within metabolic intermediate biosynthesis; chorismate biosynthesis; chorismate from D-erythrose 4-phosphate and phosphoenolpyruvate: step 4/7. Involved in the biosynthesis of the chorismate, which leads to the biosynthesis of aromatic amino acids. Catalyzes the reversible NADPH linked reduction of 3-dehydroshikimate (DHSA) to yield shikimate (SA). This is Shikimate dehydrogenase (NADP(+)) from Chlorobium phaeobacteroides (strain DSM 266 / SMG 266 / 2430).